Reading from the N-terminus, the 130-residue chain is Large ribosomal subunit protein bL19 (130 aa).

Belongs to the bacterial ribosomal protein bL19 family.

In terms of biological role, this protein is located at the 30S-50S ribosomal subunit interface and may play a role in the structure and function of the aminoacyl-tRNA binding site. This is Large ribosomal subunit protein bL19 from Cupriavidus metallidurans (strain ATCC 43123 / DSM 2839 / NBRC 102507 / CH34) (Ralstonia metallidurans).